Here is a 695-residue protein sequence, read N- to C-terminus: DNA topoisomerase 4 subunit B (695 aa).

The segment at Met1–Gly53 is disordered. A compositionally biased stretch (pro residues) spans Thr36–Ser46. ATP-binding positions include Tyr55, Asn95, Asp122, Gly164–Ala170, and Lys397. Positions Ala477–Pro591 constitute a Toprim domain. Residues Glu483, Asp556, and Asp558 each contribute to the Mg(2+) site.

The protein belongs to the type II topoisomerase family. ParE type 1 subfamily. Heterotetramer composed of ParC and ParE. Mg(2+) serves as cofactor. The cofactor is Mn(2+). It depends on Ca(2+) as a cofactor.

It catalyses the reaction ATP-dependent breakage, passage and rejoining of double-stranded DNA.. In terms of biological role, topoisomerase IV is essential for chromosome segregation. It relaxes supercoiled DNA. Performs the decatenation events required during the replication of a circular DNA molecule. This chain is DNA topoisomerase 4 subunit B, found in Caulobacter vibrioides (strain ATCC 19089 / CIP 103742 / CB 15) (Caulobacter crescentus).